The sequence spans 110 residues: UPF0060 membrane protein Swit_0423 (110 aa).

4 helical membrane passes run 6-26 (LFIF…FWAW), 29-49 (LGKS…FAWL), 61-81 (AFAA…WAVE), and 90-110 (LIGV…PRTA).

This sequence belongs to the UPF0060 family.

It is found in the cell inner membrane. In Rhizorhabdus wittichii (strain DSM 6014 / CCUG 31198 / JCM 15750 / NBRC 105917 / EY 4224 / RW1) (Sphingomonas wittichii), this protein is UPF0060 membrane protein Swit_0423.